The sequence spans 379 residues: Protein FAM53B (379 aa).

2 disordered regions span residues Cys-206–Arg-257 and Ala-302–Glu-348. A compositionally biased stretch (polar residues) spans Ser-212 to Cys-236. A compositionally biased stretch (basic residues) spans Asn-239–Arg-249. Positions Lys-246 to Arg-249 match the Nuclear localization signal motif. Residues Gln-326–Ser-342 are compositionally biased toward polar residues.

This sequence belongs to the FAM53 family. As to quaternary structure, interacts with ctnnb1. As to expression, mainly expressed in proliferating tissues.

Its subcellular location is the nucleus. Its function is as follows. Acts as a regulator of Wnt signaling pathway by regulating beta-catenin (ctnnb1) nuclear localization. Required for appendage regeneration by regulating cell proliferation. In Danio rerio (Zebrafish), this protein is Protein FAM53B.